The sequence spans 433 residues: MNVKIEGRRKIRAKVAIPSDKSISHRSIMIGSLARGTTEIENFLFAEDCLSTINCFKKLGAEIEIKNDKVIVKGKNYSLSVPQQVLDCGNSGTTTRLLLGILSTQEFEAVLDGDSSLRKRPMKRVTQPLSQMGASFEFLEKEDCLPIKVKGKKNLKPIDYTLPVSSAQVKSALIFAALKAEGKSVIKELPMSRDHTELMLKSAGADIATCFENGFYKIEVMPSNLEALKIKVPSDISSAAFFIVLALICEDSEVIIENCILNPTRTGIIDILKQMGADIEIGNVEIQNGELVGTIVARSSNLKGVVVDKNDIPRIIDEIPILAVAAAFADGKTIIDNASELRVKESDRIKTTLEMLRNFGAECYELENGLEIVGSRDNLKAGIVNSYNDHRIAMAASILACAVEGESTILNAECASISFPNFYEILLGHSKKV.

Positions 21, 22, and 26 each coordinate 3-phosphoshikimate. Lysine 21 is a phosphoenolpyruvate binding site. The phosphoenolpyruvate site is built by glycine 92 and arginine 120. Residues serine 166, glutamine 168, aspartate 317, and lysine 344 each contribute to the 3-phosphoshikimate site. A phosphoenolpyruvate-binding site is contributed by glutamine 168. Catalysis depends on aspartate 317, which acts as the Proton acceptor. The phosphoenolpyruvate site is built by arginine 348 and arginine 391.

This sequence belongs to the EPSP synthase family. As to quaternary structure, monomer.

The protein localises to the cytoplasm. It carries out the reaction 3-phosphoshikimate + phosphoenolpyruvate = 5-O-(1-carboxyvinyl)-3-phosphoshikimate + phosphate. It functions in the pathway metabolic intermediate biosynthesis; chorismate biosynthesis; chorismate from D-erythrose 4-phosphate and phosphoenolpyruvate: step 6/7. In terms of biological role, catalyzes the transfer of the enolpyruvyl moiety of phosphoenolpyruvate (PEP) to the 5-hydroxyl of shikimate-3-phosphate (S3P) to produce enolpyruvyl shikimate-3-phosphate and inorganic phosphate. This is 3-phosphoshikimate 1-carboxyvinyltransferase from Caldicellulosiruptor saccharolyticus (strain ATCC 43494 / DSM 8903 / Tp8T 6331).